The following is a 759-amino-acid chain: GTPase-activating protein rrc-1 (759 aa).

The SH3 domain maps to P164 to D243. Residues L280–F473 enclose the Rho-GAP domain. A disordered region spans residues A591–E624. The span at S612–L622 shows a compositional bias: polar residues.

As to expression, expressed in coelomocytes, excretory cells, uterine-seam cells and GLR cells.

Functions as a GTPase-activating protein (GAP) for ced-10/rac-1 and CDC42. The sequence is that of GTPase-activating protein rrc-1 (rrc-1) from Caenorhabditis elegans.